Reading from the N-terminus, the 610-residue chain is V-type proton ATPase catalytic subunit A (610 aa).

245 to 252 (GAFGCGKT) contributes to the ATP binding site.

It belongs to the ATPase alpha/beta chains family. V-ATPase is a heteromultimeric enzyme composed of a peripheral catalytic V1 complex (main components: subunits A, B, C, D, E, and F) attached to an integral membrane V0 proton pore complex (main component: the proteolipid protein).

The catalysed reaction is ATP + H2O + 4 H(+)(in) = ADP + phosphate + 5 H(+)(out). In terms of biological role, catalytic subunit of the peripheral V1 complex of vacuolar ATPase. V-ATPase vacuolar ATPase is responsible for acidifying a variety of intracellular compartments in eukaryotic cells. The sequence is that of V-type proton ATPase catalytic subunit A from Trypanosoma congolense.